A 408-amino-acid chain; its full sequence is Flavohemoprotein (408 aa).

Positions methionine 1 to glycine 138 constitute a Globin domain. A heme b-binding site is contributed by histidine 85. Active-site charge relay system residues include tyrosine 95 and glutamate 137. The tract at residues glycine 149 to valine 408 is reductase. In terms of domain architecture, FAD-binding FR-type spans asparagine 152–aspartate 263. FAD-binding positions include tyrosine 190 and arginine 205–serine 208. Glycine 277–proline 282 is an NADP(+) binding site. An FAD-binding site is contributed by phenylalanine 398–proline 401.

Belongs to the globin family. Two-domain flavohemoproteins subfamily. This sequence in the C-terminal section; belongs to the flavoprotein pyridine nucleotide cytochrome reductase family. It depends on heme b as a cofactor. The cofactor is FAD.

It carries out the reaction 2 nitric oxide + NADPH + 2 O2 = 2 nitrate + NADP(+) + H(+). The enzyme catalyses 2 nitric oxide + NADH + 2 O2 = 2 nitrate + NAD(+) + H(+). The protein is Flavohemoprotein of Rhodopirellula baltica (strain DSM 10527 / NCIMB 13988 / SH1).